The primary structure comprises 860 residues: DNA mismatch repair protein MutS (860 aa).

An ATP-binding site is contributed by 608–615 (GPNMAGKS).

It belongs to the DNA mismatch repair MutS family.

Functionally, this protein is involved in the repair of mismatches in DNA. It is possible that it carries out the mismatch recognition step. This protein has a weak ATPase activity. The chain is DNA mismatch repair protein MutS from Borrelia turicatae (strain 91E135).